A 100-amino-acid chain; its full sequence is Large ribosomal subunit protein uL23 (100 aa).

The protein belongs to the universal ribosomal protein uL23 family. In terms of assembly, part of the 50S ribosomal subunit. Contacts protein L29, and trigger factor when it is bound to the ribosome.

One of the early assembly proteins it binds 23S rRNA. One of the proteins that surrounds the polypeptide exit tunnel on the outside of the ribosome. Forms the main docking site for trigger factor binding to the ribosome. This Xylella fastidiosa (strain 9a5c) protein is Large ribosomal subunit protein uL23.